The following is an 875-amino-acid chain: Phosphoenolpyruvate carboxylase (875 aa).

Active-site residues include H137 and K542.

This sequence belongs to the PEPCase type 1 family. The cofactor is Mg(2+).

It catalyses the reaction oxaloacetate + phosphate = phosphoenolpyruvate + hydrogencarbonate. In terms of biological role, forms oxaloacetate, a four-carbon dicarboxylic acid source for the tricarboxylic acid cycle. This Pseudomonas putida (strain ATCC 47054 / DSM 6125 / CFBP 8728 / NCIMB 11950 / KT2440) protein is Phosphoenolpyruvate carboxylase.